Consider the following 281-residue polypeptide: Pantothenate synthetase (281 aa).

Position 26-33 (26-33 (MGYLHQGH)) interacts with ATP. The Proton donor role is filled by His33. Residue Gln57 coordinates (R)-pantoate. A beta-alanine-binding site is contributed by Gln57. 143 to 146 (GQKD) is a binding site for ATP. Residue Gln149 participates in (R)-pantoate binding. ATP contacts are provided by residues Val172 and 180-183 (LSSR).

It belongs to the pantothenate synthetase family. Homodimer.

The protein resides in the cytoplasm. It carries out the reaction (R)-pantoate + beta-alanine + ATP = (R)-pantothenate + AMP + diphosphate + H(+). The protein operates within cofactor biosynthesis; (R)-pantothenate biosynthesis; (R)-pantothenate from (R)-pantoate and beta-alanine: step 1/1. In terms of biological role, catalyzes the condensation of pantoate with beta-alanine in an ATP-dependent reaction via a pantoyl-adenylate intermediate. This chain is Pantothenate synthetase, found in Chloroflexus aurantiacus (strain ATCC 29366 / DSM 635 / J-10-fl).